A 514-amino-acid chain; its full sequence is Glutathione-binding protein GsiB (514 aa).

The first 27 residues, methionine 1–alanine 27, serve as a signal peptide directing secretion.

Belongs to the bacterial solute-binding protein 5 family. As to quaternary structure, the complex is composed of two ATP-binding proteins (GsiA), two transmembrane proteins (GsiC and GsiD) and a solute-binding protein (GsiB).

It localises to the periplasm. In terms of biological role, part of the ABC transporter complex GsiABCD involved in glutathione import. Binds glutathione. The chain is Glutathione-binding protein GsiB from Pectobacterium atrosepticum (strain SCRI 1043 / ATCC BAA-672) (Erwinia carotovora subsp. atroseptica).